The following is a 424-amino-acid chain: Acetyl-CoA acetyltransferase, mitochondrial (424 aa).

A mitochondrion-targeting transit peptide spans 1–30 (MAALVALHGVVRRPLLRGLLQEVRCLERSY). The residue at position 63 (Lys63) is an N6-acetyllysine; alternate. Lys63 carries the post-translational modification N6-succinyllysine; alternate. Lys75 is subject to N6-succinyllysine. Cys123 (acyl-thioester intermediate) is an active-site residue. N6-acetyllysine; alternate is present on residues Lys171, Lys178, Lys187, and Lys199. Residues Lys171, Lys178, Lys187, and Lys199 each carry the N6-succinyllysine; alternate modification. Ser204 is modified (phosphoserine). Tyr216 provides a ligand contact to CoA. Tyr216 serves as a coordination point for K(+). N6-acetyllysine; alternate is present on residues Lys220 and Lys227. 2 positions are modified to N6-succinyllysine; alternate: Lys220 and Lys227. Lys240 carries the N6-succinyllysine modification. At Lys242 the chain carries N6-acetyllysine; alternate. Lys242 carries the N6-succinyllysine; alternate modification. Lys248 and Lys254 each carry N6-acetyllysine. CoA is bound by residues 255–257 (RVD) and Lys260. At Lys260 the chain carries N6-acetyllysine; alternate. N6-succinyllysine; alternate is present on Lys260. N6-succinyllysine occurs at positions 263 and 265. Lys270 bears the N6-acetyllysine mark. Ala277, Ala278, and Ala280 together coordinate K(+). Ser281 is a binding site for CoA. At Lys335 the chain carries N6-acetyllysine. Val378 provides a ligand contact to K(+). Residue Cys410 is the Proton donor/acceptor of the active site.

This sequence belongs to the thiolase-like superfamily. Thiolase family. Homotetramer. Post-translationally, succinylation at Lys-265, adjacent to a coenzyme A binding site. Desuccinylated by SIRT5.

The protein localises to the mitochondrion. The enzyme catalyses 2 acetyl-CoA = acetoacetyl-CoA + CoA. It carries out the reaction propanoyl-CoA + acetyl-CoA = 2-methyl-3-oxobutanoyl-CoA + CoA. The protein operates within lipid metabolism; fatty acid beta-oxidation. With respect to regulation, activated by potassium ions, but not sodium ions. This is one of the enzymes that catalyzes the last step of the mitochondrial beta-oxidation pathway, an aerobic process breaking down fatty acids into acetyl-CoA. Using free coenzyme A/CoA, catalyzes the thiolytic cleavage of medium- to long-chain 3-oxoacyl-CoAs into acetyl-CoA and a fatty acyl-CoA shortened by two carbon atoms. The activity of the enzyme is reversible and it can also catalyze the condensation of two acetyl-CoA molecules into acetoacetyl-CoA. Thereby, it plays a major role in ketone body metabolism. The polypeptide is Acetyl-CoA acetyltransferase, mitochondrial (Acat1) (Mus musculus (Mouse)).